The sequence spans 283 residues: Bis(5'-nucleosyl)-tetraphosphatase, symmetrical (283 aa).

The protein belongs to the Ap4A hydrolase family.

It carries out the reaction P(1),P(4)-bis(5'-adenosyl) tetraphosphate + H2O = 2 ADP + 2 H(+). Its function is as follows. Hydrolyzes diadenosine 5',5'''-P1,P4-tetraphosphate to yield ADP. The protein is Bis(5'-nucleosyl)-tetraphosphatase, symmetrical of Pseudomonas fluorescens (strain SBW25).